The sequence spans 388 residues: S-adenosylmethionine synthase (388 aa).

H16 provides a ligand contact to ATP. Mg(2+) is bound at residue D18. Residue E44 participates in K(+) binding. E57 and Q100 together coordinate L-methionine. The interval 100 to 110 (QSPEIAQGVDR) is flexible loop. ATP is bound by residues 165-167 (DAK), D240, 246-247 (RK), A263, and K267. D240 lines the L-methionine pocket. K271 serves as a coordination point for L-methionine.

This sequence belongs to the AdoMet synthase family. As to quaternary structure, homotetramer; dimer of dimers. Mg(2+) is required as a cofactor. Requires K(+) as cofactor.

The protein localises to the cytoplasm. The enzyme catalyses L-methionine + ATP + H2O = S-adenosyl-L-methionine + phosphate + diphosphate. It functions in the pathway amino-acid biosynthesis; S-adenosyl-L-methionine biosynthesis; S-adenosyl-L-methionine from L-methionine: step 1/1. In terms of biological role, catalyzes the formation of S-adenosylmethionine (AdoMet) from methionine and ATP. The overall synthetic reaction is composed of two sequential steps, AdoMet formation and the subsequent tripolyphosphate hydrolysis which occurs prior to release of AdoMet from the enzyme. This chain is S-adenosylmethionine synthase, found in Acinetobacter baylyi (strain ATCC 33305 / BD413 / ADP1).